Here is a 177-residue protein sequence, read N- to C-terminus: Nucleoside triphosphate/diphosphate phosphatase (177 aa).

The active-site Proton donor is Arg23. Mg(2+) contacts are provided by Asn87, Asp103, Asp105, Asp107, Asp120, and Glu123.

Belongs to the Ntdp family. Mg(2+) is required as a cofactor.

The enzyme catalyses a ribonucleoside 5'-triphosphate + H2O = a ribonucleoside 5'-diphosphate + phosphate + H(+). The catalysed reaction is a ribonucleoside 5'-diphosphate + H2O = a ribonucleoside 5'-phosphate + phosphate + H(+). Has nucleoside phosphatase activity towards nucleoside triphosphates and nucleoside diphosphates. The polypeptide is Nucleoside triphosphate/diphosphate phosphatase (Streptococcus mutans serotype c (strain ATCC 700610 / UA159)).